The sequence spans 249 residues: ATP synthase subunit a (249 aa).

6 consecutive transmembrane segments (helical) span residues 26–46 (FTNV…FLYL), 84–104 (FFPF…IGLF), 114–134 (IIVT…YGFF), 143–163 (LFVP…IEII), 185–205 (ITLK…ALGI), and 208–228 (AVLP…VAFL).

It belongs to the ATPase A chain family. As to quaternary structure, F-type ATPases have 2 components, CF(1) - the catalytic core - and CF(0) - the membrane proton channel. CF(1) has five subunits: alpha(3), beta(3), gamma(1), delta(1), epsilon(1). CF(0) has three main subunits: a(1), b(2) and c(9-12). The alpha and beta chains form an alternating ring which encloses part of the gamma chain. CF(1) is attached to CF(0) by a central stalk formed by the gamma and epsilon chains, while a peripheral stalk is formed by the delta and b chains.

The protein localises to the cell inner membrane. Key component of the proton channel; it plays a direct role in the translocation of protons across the membrane. The protein is ATP synthase subunit a of Brucella canis (strain ATCC 23365 / NCTC 10854 / RM-666).